Here is a 102-residue protein sequence, read N- to C-terminus: Large ribosomal subunit protein bL21 (102 aa).

The protein belongs to the bacterial ribosomal protein bL21 family. Part of the 50S ribosomal subunit. Contacts protein L20.

Functionally, this protein binds to 23S rRNA in the presence of protein L20. The polypeptide is Large ribosomal subunit protein bL21 (Nocardioides sp. (strain ATCC BAA-499 / JS614)).